Consider the following 60-residue polypeptide: MNAALIAALLILGALTLDATAYSSTCERIPCTNNSDCHGPDLCQCRPPRGDDFGYFCSEY.

A signal peptide spans 1–21 (MNAALIAALLILGALTLDATA). The Cell attachment site motif lies at 49 to 51 (RGD).

This sequence belongs to the ixodegrin family. Post-translationally, contains 3 disulfide bonds. Expressed in salivary glands.

The protein localises to the secreted. Tick salivary platelet aggregation inhibitor that plays an important part in the anti-hemostatic strategy of ticks. Inhibits platelet aggregation induced by ADP, thrombin and thromboxane A2 (TXA2). Blocks platelet adhesion to soluble collagen (most probably through the binding to alpha-2/beta-1 integrin (ITGA2/ITGB1)) and binds to purified glycoprotein IIb/IIIa (ITGA2B/ITGB3) in a dose-dependent manner. In vivo, reduces thrombus weight effectively in a rat arteriovenous shunt model and inhibits thrombosis in a carrageenan-induced mouse tail thrombosis model. The sequence is that of Ixodegrin YY-39 from Ixodes scapularis (Black-legged tick).